We begin with the raw amino-acid sequence, 165 residues long: Yapsin-5 (165 aa).

An N-terminal signal peptide occupies residues 1 to 24 (MQLFSILSLLSSLMCSLTVLGSSA). N-linked (GlcNAc...) asparagine glycosylation is present at Asn57. Residues 67–165 (YVVKMEIGTP…TRLSSMTYTY (99 aa)) enclose the Peptidase A1 domain.

This sequence belongs to the peptidase A1 family.

This is Yapsin-5 (YPS5) from Saccharomyces cerevisiae (strain ATCC 204508 / S288c) (Baker's yeast).